A 535-amino-acid chain; its full sequence is Dual specificity calcium/calmodulin-dependent 3',5'-cyclic nucleotide phosphodiesterase 1B (535 aa).

The tract at residues 1–21 is disordered; it reads MELSPRSPPEMLESDCPSPLE. A phosphoserine mark is found at serine 7 and serine 14. 2 calmodulin-binding regions span residues 27 to 47 and 117 to 140; these read SKKMWIKLRSLLRYMVKQLEN and EKPKFRSIVHAVQAGIFVERMFRR. Residues 145–502 form the PDEase domain; it reads VGPTYSTAVH…QKWKERAASG (358 aa). The active-site Proton donor is the histidine 222. Zn(2+) is bound by residues histidine 226, histidine 262, aspartate 263, and aspartate 369. Aspartate 263 provides a ligand contact to Mg(2+). Disordered regions lie at residues 444–474 and 495–535; these read QPLADDDSKPKSQPSFQWRQPSLDVDVGDPN and WKER…GNLD. Over residues 454–463 the composition is skewed to polar residues; sequence KSQPSFQWRQ. Residues serine 465 and serine 513 each carry the phosphoserine modification.

This sequence belongs to the cyclic nucleotide phosphodiesterase family. PDE1 subfamily. Homodimer. Zn(2+) is required as a cofactor. The cofactor is Mg(2+).

Its subcellular location is the cytoplasm. It is found in the cytosol. It carries out the reaction a nucleoside 3',5'-cyclic phosphate + H2O = a nucleoside 5'-phosphate + H(+). It catalyses the reaction 3',5'-cyclic GMP + H2O = GMP + H(+). The catalysed reaction is 3',5'-cyclic AMP + H2O = AMP + H(+). With respect to regulation, type I PDE are activated by the binding of calmodulin in the presence of Ca(2+). Cyclic nucleotide phosphodiesterase with a dual specificity for the second messengers cAMP and cGMP, which are key regulators of many important physiological processes. Has a preference for cGMP as a substrate. The protein is Dual specificity calcium/calmodulin-dependent 3',5'-cyclic nucleotide phosphodiesterase 1B of Mus musculus (Mouse).